A 178-amino-acid polypeptide reads, in one-letter code: Endothelin-2 (178 aa).

The first 24 residues, 1 to 24 (MVSVPTTWCSVALALLVALHEGKG), serve as a signal peptide directing secretion. A propeptide spanning residues 25–46 (QAAATLEQPASSSHAQGTHLRL) is cleaved from the precursor. Intrachain disulfides connect Cys49–Cys63 and Cys51–Cys59. The propeptide occupies 70–178 (VNTPEQTAPY…RSTHSRWRKR (109 aa)). Residues 96 to 111 (CQCSSARDPACATFCL) form an endothelin-like region. Residues 159–178 (KRQQEAMREPRSTHSRWRKR) are disordered. Residues 160 to 170 (RQQEAMREPRS) are compositionally biased toward basic and acidic residues.

This sequence belongs to the endothelin/sarafotoxin family. In terms of tissue distribution, expressed in lung, but not in placental stem villi vessels or cultured placental villi smooth muscle cells.

The protein resides in the secreted. Endothelins are endothelium-derived vasoconstrictor peptides. This chain is Endothelin-2 (EDN2), found in Homo sapiens (Human).